A 623-amino-acid chain; its full sequence is Oviduct-specific glycoprotein (623 aa).

A signal peptide spans Met1–Ala21. Positions His22–Ala385 constitute a GH18 domain. Cys26 and Cys51 are joined by a disulfide. Residues Leu71–Gln72, Gly98–Asn101, Tyr142, Leu211–Asp214, and Trp355 each bind chitin. N-linked (GlcNAc...) asparagine glycans are attached at residues Asn402 and Asn441. 2 disordered regions span residues Leu539–Gly558 and Arg594–Gly623. Positions Thr613 to Gly623 are enriched in polar residues.

Belongs to the glycosyl hydrolase 18 family. As to expression, oviduct.

The protein resides in the cytoplasmic vesicle. It localises to the secretory vesicle. Functionally, binds to oocyte zona pellucida in vivo. May play a role in the fertilization process and/or early embryonic development. The protein is Oviduct-specific glycoprotein (OVGP1) of Papio anubis (Olive baboon).